The sequence spans 180 residues: Large ribosomal subunit protein uL6 (180 aa).

It belongs to the universal ribosomal protein uL6 family. As to quaternary structure, part of the 50S ribosomal subunit.

This protein binds to the 23S rRNA, and is important in its secondary structure. It is located near the subunit interface in the base of the L7/L12 stalk, and near the tRNA binding site of the peptidyltransferase center. This Salinispora arenicola (strain CNS-205) protein is Large ribosomal subunit protein uL6.